Reading from the N-terminus, the 506-residue chain is ATP synthase subunit alpha (506 aa).

169-176 (GDRGTGKT) is an ATP binding site.

The protein belongs to the ATPase alpha/beta chains family. As to quaternary structure, F-type ATPases have 2 components, CF(1) - the catalytic core - and CF(0) - the membrane proton channel. CF(1) has five subunits: alpha(3), beta(3), gamma(1), delta(1), epsilon(1). CF(0) has three main subunits: a(1), b(2) and c(9-12). The alpha and beta chains form an alternating ring which encloses part of the gamma chain. CF(1) is attached to CF(0) by a central stalk formed by the gamma and epsilon chains, while a peripheral stalk is formed by the delta and b chains.

The protein localises to the cell membrane. The catalysed reaction is ATP + H2O + 4 H(+)(in) = ADP + phosphate + 5 H(+)(out). Produces ATP from ADP in the presence of a proton gradient across the membrane. The alpha chain is a regulatory subunit. The protein is ATP synthase subunit alpha of Symbiobacterium thermophilum (strain DSM 24528 / JCM 14929 / IAM 14863 / T).